The sequence spans 446 residues: Na(+)-translocating NADH-quinone reductase subunit A (446 aa).

It belongs to the NqrA family. As to quaternary structure, composed of six subunits; NqrA, NqrB, NqrC, NqrD, NqrE and NqrF.

The enzyme catalyses a ubiquinone + n Na(+)(in) + NADH + H(+) = a ubiquinol + n Na(+)(out) + NAD(+). Its function is as follows. NQR complex catalyzes the reduction of ubiquinone-1 to ubiquinol by two successive reactions, coupled with the transport of Na(+) ions from the cytoplasm to the periplasm. NqrA to NqrE are probably involved in the second step, the conversion of ubisemiquinone to ubiquinol. The protein is Na(+)-translocating NADH-quinone reductase subunit A of Histophilus somni (strain 2336) (Haemophilus somnus).